Reading from the N-terminus, the 335-residue chain is Transmembrane protein 120B-B (335 aa).

A coiled-coil region spans residues 1 to 39 (MSLQKCQEEWGELEKEFQQLQETHKVYKQKLEELSSLQN). 6 helical membrane-spanning segments follow: residues 100–116 (SLYL…TLLS), 130–150 (FKLY…FVLH), 157–177 (VFNF…SILI), 193–213 (VSTF…YQMF), 268–288 (FLLP…MTLF), and 300–320 (QVFV…LTTL).

Belongs to the TMEM120 family.

It localises to the nucleus inner membrane. Functionally, necessary for efficient adipogenesis. Does not show ion channel activity. The protein is Transmembrane protein 120B-B (tmem120b-b) of Xenopus laevis (African clawed frog).